We begin with the raw amino-acid sequence, 292 residues long: 33 kDa chaperonin (292 aa).

2 disulfides stabilise this stretch: cysteine 229/cysteine 231 and cysteine 262/cysteine 265.

The protein belongs to the HSP33 family. Under oxidizing conditions two disulfide bonds are formed involving the reactive cysteines. Under reducing conditions zinc is bound to the reactive cysteines and the protein is inactive.

Its subcellular location is the cytoplasm. Its function is as follows. Redox regulated molecular chaperone. Protects both thermally unfolding and oxidatively damaged proteins from irreversible aggregation. Plays an important role in the bacterial defense system toward oxidative stress. In Photobacterium profundum (strain SS9), this protein is 33 kDa chaperonin.